Reading from the N-terminus, the 300-residue chain is D-alanine--D-alanine ligase (300 aa).

Positions 99–293 constitute an ATP-grasp domain; sequence KKILKYANIN…FAELLNSIVK (195 aa). 126–181 is an ATP binding site; that stretch reads IEKIGYPVFVKPNSGGSSVATNLVKDGDGIKEAVELALKYDKEVMIENYTKGEEIT. 3 residues coordinate Mg(2+): Asp-248, Glu-260, and Asn-262.

This sequence belongs to the D-alanine--D-alanine ligase family. Requires Mg(2+) as cofactor. Mn(2+) serves as cofactor.

Its subcellular location is the cytoplasm. The catalysed reaction is 2 D-alanine + ATP = D-alanyl-D-alanine + ADP + phosphate + H(+). Its pathway is cell wall biogenesis; peptidoglycan biosynthesis. Its function is as follows. Cell wall formation. The protein is D-alanine--D-alanine ligase of Clostridium botulinum (strain 657 / Type Ba4).